The sequence spans 122 residues: Large ribosomal subunit protein uL22 (122 aa).

The disordered stretch occupies residues 103 to 122 (VEGKEMKSSKSHKKNQAEGK).

Belongs to the universal ribosomal protein uL22 family. In terms of assembly, part of the 50S ribosomal subunit.

Its function is as follows. This protein binds specifically to 23S rRNA; its binding is stimulated by other ribosomal proteins, e.g. L4, L17, and L20. It is important during the early stages of 50S assembly. It makes multiple contacts with different domains of the 23S rRNA in the assembled 50S subunit and ribosome. The globular domain of the protein is located near the polypeptide exit tunnel on the outside of the subunit, while an extended beta-hairpin is found that lines the wall of the exit tunnel in the center of the 70S ribosome. In Helicobacter pylori (strain P12), this protein is Large ribosomal subunit protein uL22.